The primary structure comprises 331 residues: MLNKVIKTTRLTAEDINGAWTIMPTPSTPDASDWRSTNTVDLDETARIVEELIAAGVNGILSMGTFGECATLTWEEKRDYVSTVVETIRGRVPYFCGTTALNTREVIRQTRELIDIGANGTMLGVPMWVKMDLPTAVQFYRDVAGAVPEAAIAIYANPEAFKFDFPRPFWAEMSKIPQVVTAKYLGIGMLDLDLKLAPNIRFLPHEDDYYAAARINPERITAFWSSGAMCGPATAIMLRDEVERAKSTGDWIKAKAISDDMRAADSTLFPRGDFSEFSKYNIGLEKARMDAAGWLKAGPCRPPYNLVPEDYLVGAQKSGKAWAALHAKYSK.

This sequence belongs to the DapA family.

The catalysed reaction is (3E)-4-(2-hydroxyphenyl)-2-oxobut-3-enoate + H2O = salicylaldehyde + pyruvate. The protein operates within aromatic compound metabolism; naphthalene degradation. Functionally, involved in the naphthalene upper catabolic pathway. Catalyzes the transformation of trans-O-hydroxybenzylidenepyruvate (THBPA) to salicylaldehyde and pyruvate. The reaction is reversible. Can also use substrate which carry trans-alpha,beta-unsaturated keto acid side chain and adjacent hydroxyl group such as trans-4-(3-hydroxy-2-thianaphthenyl)-2-oxo-but-3-enoate, trans-4-(3-hydroxy-2-benzofuranyl)-2-oxobut-3-enoate, and trans-4-(3-hydroxy-2-thienyl)-2-oxobut-3-enoate. The sequence is that of Trans-O-hydroxybenzylidenepyruvate hydratase-aldolase (nahE) from Pseudomonas putida (Arthrobacter siderocapsulatus).